Here is a 297-residue protein sequence, read N- to C-terminus: Formamidopyrimidine-DNA glycosylase (297 aa).

Proline 2 functions as the Schiff-base intermediate with DNA in the catalytic mechanism. The active-site Proton donor is the glutamate 3. Catalysis depends on lysine 58, which acts as the Proton donor; for beta-elimination activity. DNA contacts are provided by histidine 104, arginine 127, and lysine 170. The FPG-type zinc-finger motif lies at 261 to 297 (NVYDREGEACRTPGCTGTVERMTQAGRSTFHCPQCQR). The active-site Proton donor; for delta-elimination activity is the arginine 287.

It belongs to the FPG family. As to quaternary structure, monomer. Zn(2+) serves as cofactor.

It catalyses the reaction Hydrolysis of DNA containing ring-opened 7-methylguanine residues, releasing 2,6-diamino-4-hydroxy-5-(N-methyl)formamidopyrimidine.. It carries out the reaction 2'-deoxyribonucleotide-(2'-deoxyribose 5'-phosphate)-2'-deoxyribonucleotide-DNA = a 3'-end 2'-deoxyribonucleotide-(2,3-dehydro-2,3-deoxyribose 5'-phosphate)-DNA + a 5'-end 5'-phospho-2'-deoxyribonucleoside-DNA + H(+). Functionally, involved in base excision repair of DNA damaged by oxidation or by mutagenic agents. Acts as a DNA glycosylase that recognizes and removes damaged bases. Has a preference for oxidized purines, such as 7,8-dihydro-8-oxoguanine (8-oxoG). Has AP (apurinic/apyrimidinic) lyase activity and introduces nicks in the DNA strand. Cleaves the DNA backbone by beta-delta elimination to generate a single-strand break at the site of the removed base with both 3'- and 5'-phosphates. In Allorhizobium ampelinum (strain ATCC BAA-846 / DSM 112012 / S4) (Agrobacterium vitis (strain S4)), this protein is Formamidopyrimidine-DNA glycosylase.